The sequence spans 115 residues: Cobalt-zinc-cadmium resistance protein CzcI (115 aa).

An N-terminal signal peptide occupies residues 1-20; sequence MRRFVLIFVLLILPFQFSWA. Over residues 93–102 the composition is skewed to polar residues; it reads QHSSEFSSLN. A disordered region spans residues 93–115; it reads QHSSEFSSLNARAPDRPQWQRLA.

The protein resides in the periplasm. Its function is as follows. Component of the czc cation-efflux system that confers resistance to cobalt, zinc and cadmium. May have a regulatory function. The protein is Cobalt-zinc-cadmium resistance protein CzcI (czcI) of Cupriavidus metallidurans (strain ATCC 43123 / DSM 2839 / NBRC 102507 / CH34) (Ralstonia metallidurans).